Consider the following 107-residue polypeptide: UPF0145 protein PC1_1703 (107 aa).

Belongs to the UPF0145 family.

In Pectobacterium carotovorum subsp. carotovorum (strain PC1), this protein is UPF0145 protein PC1_1703.